A 472-amino-acid polypeptide reads, in one-letter code: Carboxypeptidase Q (472 aa).

The N-terminal stretch at 1–20 is a signal peptide; that stretch reads MRFLFFLFVAVVHLFSLGSG. The propeptide occupies 21–44; that stretch reads KAIYKSGVSQRTFQEIKEEIANYE. A glycan (N-linked (GlcNAc...) asparagine) is linked at Asn-61. Residues His-290 and Asp-302 each contribute to the Zn(2+) site. Glu-336 functions as the Nucleophile in the catalytic mechanism. Glu-337 contacts Zn(2+). Residue Asn-353 is glycosylated (N-linked (GlcNAc...) asparagine). Asp-364 is a binding site for Zn(2+). A glycan (N-linked (GlcNAc...) asparagine) is linked at Asn-396. Residue His-434 participates in Zn(2+) binding.

It belongs to the peptidase M28 family. In terms of assembly, homodimer. The monomeric form is inactive while the homodimer is active. In terms of processing, N-glycosylated. The secreted form is modified by hybrid or complex type oligosaccharide chains.

It localises to the endoplasmic reticulum. The protein localises to the golgi apparatus. Its subcellular location is the lysosome. The protein resides in the secreted. Its function is as follows. Carboxypeptidase that may play an important role in the hydrolysis of circulating peptides. Catalyzes the hydrolysis of dipeptides with unsubstituted terminals into amino acids. May play a role in the liberation of thyroxine hormone from its thyroglobulin (Tg) precursor. In Rattus norvegicus (Rat), this protein is Carboxypeptidase Q (Cpq).